A 553-amino-acid polypeptide reads, in one-letter code: Retrotransposon Gag-like protein 3 (553 aa).

Residues 2 to 43 adopt a coiled-coil conformation; sequence VEDLAASYVTLKLENEILQAQVKRLMEENAALQAQIPELQKS. Disordered stretches follow at residues 38 to 274 and 474 to 514; these read PELQ…PLDP and SGGV…EAER. Positions 45-57 are enriched in basic and acidic residues; the sequence is AVKEHEPLRKPSE. Over residues 58-73 the composition is skewed to low complexity; it reads AQEPPESPEFPAARES. Over residues 87–113 the composition is skewed to basic and acidic residues; that stretch reads EPTKIREPREPSAISELREPPEIKEPQ. Residues 118 to 127 are compositionally biased toward polar residues; the sequence is TNESGESSAI. Basic and acidic residues predominate over residues 132 to 147; that stretch reads GSPEIKEPHLPPKSKE. Polar residues predominate over residues 239–250; sequence QTVPEYQETSSQ. Positions 474–483 are enriched in low complexity; it reads SGGVDSSSSS. A compositionally biased stretch (polar residues) spans 495 to 507; the sequence is TENQPVQATSNRP. A CCHC-type zinc finger spans residues 523 to 537; the sequence is CLYCGHPGHFARDCP.

As to expression, expressed in embryonic myogenic progenitor cells, not expressed in adult and aged satellite cells.

It is found in the nucleus. May function as a transcriptional regulator. Plays a role in postnatal myogenesis, may be involved in the regulation of satellite cells self-renewal. The sequence is that of Retrotransposon Gag-like protein 3 from Mus musculus (Mouse).